The sequence spans 66 residues: Large ribosomal subunit protein bL33c (66 aa).

This sequence belongs to the bacterial ribosomal protein bL33 family.

The protein resides in the plastid. It localises to the chloroplast. The protein is Large ribosomal subunit protein bL33c of Fagopyrum esculentum subsp. ancestrale (Wild buckwheat).